The sequence spans 189 residues: Translation initiation factor IF-3 (189 aa).

It belongs to the IF-3 family. In terms of assembly, monomer.

The protein resides in the cytoplasm. In terms of biological role, IF-3 binds to the 30S ribosomal subunit and shifts the equilibrium between 70S ribosomes and their 50S and 30S subunits in favor of the free subunits, thus enhancing the availability of 30S subunits on which protein synthesis initiation begins. The protein is Translation initiation factor IF-3 of Corynebacterium glutamicum (strain R).